The primary structure comprises 122 residues: Large ribosomal subunit protein uL14c (122 aa).

The protein belongs to the universal ribosomal protein uL14 family. Part of the 50S ribosomal subunit.

It is found in the plastid. The protein localises to the chloroplast. Its function is as follows. Binds to 23S rRNA. This Chara vulgaris (Common stonewort) protein is Large ribosomal subunit protein uL14c.